Here is a 252-residue protein sequence, read N- to C-terminus: tRNA (guanine-N(1)-)-methyltransferase (252 aa).

S-adenosyl-L-methionine contacts are provided by residues Gly-117 and 137–142 (IGDYVL).

Belongs to the RNA methyltransferase TrmD family. As to quaternary structure, homodimer.

It localises to the cytoplasm. It carries out the reaction guanosine(37) in tRNA + S-adenosyl-L-methionine = N(1)-methylguanosine(37) in tRNA + S-adenosyl-L-homocysteine + H(+). Functionally, specifically methylates guanosine-37 in various tRNAs. The sequence is that of tRNA (guanine-N(1)-)-methyltransferase from Idiomarina loihiensis (strain ATCC BAA-735 / DSM 15497 / L2-TR).